The sequence spans 1038 residues: Elongation factor 3 (1038 aa).

HEAT repeat units lie at residues 93–131 (EAYLLPLLSVFLDLLGDKKPTVRPVAQEAALTIISSANK), 133–170 (STIRILPILFDGLDRSKKWQTKKGALDLIAELSKVAPY), 174–211 (RCLPDIIPQVTDCMWDTRKEVKVAARDTMTKVCNVVGN), 213–249 (DIEPFIPALVSCLANPTEVPECTHKLASTTFVKTVEA), 255–287 (MEPLLKRALAEGKTAVKRQAAVIIDNMCKLMDD), and 292–331 (QLFIPKLLPGLKKVIETQADPECREVATRAHETLFVAGGS). E406 serves as a coordination point for ADP. ABC transporter domains follow at residues 426–654 (IFIE…YYEL) and 680–995 (IRLT…EEVT). 4 residues coordinate ADP: N716, E924, N927, and H953. The interval 1012–1038 (RKEKKAKDKARKEAEARGEYYSDSDEE) is disordered. Over residues 1021–1031 (ARKEAEARGEY) the composition is skewed to basic and acidic residues.

It belongs to the ABC transporter superfamily. ABCF family. EF3 subfamily. In terms of assembly, monomer.

It localises to the cytoplasm. It carries out the reaction ATP + H2O = ADP + phosphate + H(+). Its pathway is protein biosynthesis; polypeptide chain elongation. Ribosome-dependent ATPase that functions in cytoplasmic translation elongation. Required for the ATP-dependent release of deacylated tRNA from the ribosomal E-site during protein biosynthesis. Stimulates the eEF1A-dependent binding of aminoacyl-tRNA to the ribosomal A-site, which has reduced affinity for tRNA as long as the E-site is occupied. Assists translation termination by stimulating the release of nascent protein from the ribosome by release factors. This Phytophthora infestans (strain T30-4) (Potato late blight agent) protein is Elongation factor 3.